A 791-amino-acid chain; its full sequence is IQ motif and ubiquitin-like domain-containing protein (791 aa).

The segment at 1–73 (MSNQQEKYEA…SDQSFSSLEP (73 aa)) is disordered. In terms of domain architecture, Ubiquitin-like spans 131-207 (ATVKVVLIPV…VQVEIFSTNP (77 aa)). One can recognise an IQ domain in the interval 338–367 (RLKAVIVIQTYYRQWHAKIFVENLRRQKSL).

As to quaternary structure, component of the axonemal radial spoke 1 (RS1) complex, at least composed of spoke head proteins RSPH1, RSPH3, RSPH9 and the cilia-specific component RSPH4A or sperm-specific component RSPH6A, spoke stalk proteins RSPH14, DNAJB13, DYDC1, ROPN1L and NME5, and the anchor protein IQUB. Does not appear to be part of radial spoke complexes 2 or 3 (RS2 or RS3). Interacts with CALM1. Interacts with DNAJB13. Interacts with DYNLL2. Interacts with NME5. Interacts with RSPH3. Interacts with RSPH9. Interacts with ZMYND10. Interacts with calmodulin; the interaction occurs in conditions of low but not high calcium.

It localises to the cytoplasm. It is found in the cytoskeleton. The protein localises to the flagellum axoneme. Its subcellular location is the cell projection. The protein resides in the cilium. In terms of biological role, adapter protein that anchors the radial spoke 1 (RS1) complex to the A microtubule of outer doublet microtubules in axonemes. The triple radial spokes (RS1, RS2 and RS3) are required to modulate beating of the sperm flagellum. May play a role in inhibiting signaling via MAPK1/ERK2 and MAPK3/ERK1. Additionally, may play a role in the functioning of cilia. Not required for the functioning of tracheal or ependymal cilia. This chain is IQ motif and ubiquitin-like domain-containing protein (IQUB), found in Homo sapiens (Human).